Reading from the N-terminus, the 638-residue chain is tRNA uridine 5-carboxymethylaminomethyl modification enzyme MnmG (638 aa).

FAD-binding positions include 15–20 (GAGHAG), Ile-127, and Ser-182. 276–290 (GPRYCPSIEDKIVRF) lines the NAD(+) pocket. Gln-373 is a binding site for FAD.

This sequence belongs to the MnmG family. In terms of assembly, homodimer. Heterotetramer of two MnmE and two MnmG subunits. FAD serves as cofactor.

The protein resides in the cytoplasm. Functionally, NAD-binding protein involved in the addition of a carboxymethylaminomethyl (cmnm) group at the wobble position (U34) of certain tRNAs, forming tRNA-cmnm(5)s(2)U34. This chain is tRNA uridine 5-carboxymethylaminomethyl modification enzyme MnmG, found in Streptococcus suis (strain 98HAH33).